Consider the following 154-residue polypeptide: Periplasmic nitrate reductase, electron transfer subunit (154 aa).

An N-terminal signal peptide occupies residues methionine 1–threonine 24. Residues alanine 27–glutamate 47 form a disordered region. Heme c-binding residues include histidine 68, cysteine 82, cysteine 85, histidine 86, histidine 103, cysteine 122, cysteine 125, and histidine 126.

Belongs to the NapB family. Component of the periplasmic nitrate reductase NapAB complex composed of NapA and NapB. Binds 2 heme C groups per subunit.

Its subcellular location is the periplasm. Electron transfer subunit of the periplasmic nitrate reductase complex NapAB. Receives electrons from the membrane-anchored tetraheme c-type NapC protein and transfers these to NapA subunit, thus allowing electron flow between membrane and periplasm. Essential for periplasmic nitrate reduction with nitrate as the terminal electron acceptor. This chain is Periplasmic nitrate reductase, electron transfer subunit, found in Cereibacter sphaeroides (Rhodobacter sphaeroides).